Consider the following 598-residue polypeptide: Elongation factor 4 (598 aa).

In terms of domain architecture, tr-type G spans 4–186 (KHIRNFSIIA…VIVRQIPPPE (183 aa)). Residues 16 to 21 (DHGKST) and 133 to 136 (NKID) contribute to the GTP site.

Belongs to the TRAFAC class translation factor GTPase superfamily. Classic translation factor GTPase family. LepA subfamily.

The protein localises to the cell inner membrane. The enzyme catalyses GTP + H2O = GDP + phosphate + H(+). Functionally, required for accurate and efficient protein synthesis under certain stress conditions. May act as a fidelity factor of the translation reaction, by catalyzing a one-codon backward translocation of tRNAs on improperly translocated ribosomes. Back-translocation proceeds from a post-translocation (POST) complex to a pre-translocation (PRE) complex, thus giving elongation factor G a second chance to translocate the tRNAs correctly. Binds to ribosomes in a GTP-dependent manner. This Pseudoalteromonas atlantica (strain T6c / ATCC BAA-1087) protein is Elongation factor 4.